A 129-amino-acid polypeptide reads, in one-letter code: Small ribosomal subunit protein uS8 (129 aa).

Belongs to the universal ribosomal protein uS8 family. In terms of assembly, part of the 30S ribosomal subunit. Contacts proteins S5 and S12.

In terms of biological role, one of the primary rRNA binding proteins, it binds directly to 16S rRNA central domain where it helps coordinate assembly of the platform of the 30S subunit. The polypeptide is Small ribosomal subunit protein uS8 (Mesoplasma florum (strain ATCC 33453 / NBRC 100688 / NCTC 11704 / L1) (Acholeplasma florum)).